Consider the following 98-residue polypeptide: Large ribosomal subunit protein uL23 (98 aa).

Belongs to the universal ribosomal protein uL23 family. Part of the 50S ribosomal subunit. Contacts protein L29, and trigger factor when it is bound to the ribosome.

Functionally, one of the early assembly proteins it binds 23S rRNA. One of the proteins that surrounds the polypeptide exit tunnel on the outside of the ribosome. Forms the main docking site for trigger factor binding to the ribosome. The sequence is that of Large ribosomal subunit protein uL23 from Koribacter versatilis (strain Ellin345).